A 170-amino-acid polypeptide reads, in one-letter code: Acetyl-CoA decarbonylase/synthase complex subunit epsilon 2 (170 aa).

The protein belongs to the CdhB family. In terms of assembly, heterotetramer of two alpha and two epsilon subunits. The ACDS complex is made up of alpha, epsilon, beta, gamma and delta subunits with a probable stoichiometry of (alpha(2)epsilon(2))(4)-beta(8)-(gamma(1)delta(1))(8).

The protein operates within one-carbon metabolism; methanogenesis from acetate. In terms of biological role, part of a complex that catalyzes the reversible cleavage of acetyl-CoA, allowing growth on acetate as sole source of carbon and energy. The alpha-epsilon subcomponent functions as a carbon monoxide dehydrogenase. The precise role of the epsilon subunit is unclear; it may have a stabilizing role within the alpha(2)epsilon(2) component and/or be involved in electron transfer to FAD during a potential FAD-mediated CO oxidation. The protein is Acetyl-CoA decarbonylase/synthase complex subunit epsilon 2 (cdhB2) of Methanosarcina thermophila.